A 93-amino-acid polypeptide reads, in one-letter code: OMEGA-ectatommitoxin(02)-Rm1c (93 aa).

A signal peptide spans 1–30 (MKDSYISIVIAYLMVTFILVSSMPIEGEKG). 3 disulfides stabilise this stretch: Cys39–Cys52, Cys47–Cys68, and Cys70–Cys79. Residues 43–80 (YENYCFNGKCVHVVAQDEPGKPCYSCICDEFYIGERCG) enclose the EGF-like domain.

Belongs to the EGF domain peptide family. As to expression, expressed by the venom gland.

Its subcellular location is the secreted. In terms of biological role, ant peptide with probable defensive activity which acts as a potent agonist of the mammalian epidermal growth factor receptor (EGFR). Mimics, both structurally and functionally, vertebrate epidermal growth factor (EGF) peptide hormones. In vivo, intraplantar injection in mice causes long-lasting (several days) hypersensitivity of the injected paw to both mechanical and thermal stimuli. Its long-lasting effect is unusual for venom toxins whose effects are usually immediate. One possible explanation is that it would reduce the duration of a nest attack, discourage future attacks, or enhance the actions of subsequent exposure to other pain-inducing venom peptides. The polypeptide is OMEGA-ectatommitoxin(02)-Rm1c (Rhytidoponera metallica (Australian green-headed ant)).